Consider the following 2138-residue polypeptide: Conidial yellow pigment biosynthesis polyketide synthase melA (2138 aa).

Residues tyrosine 8–histidine 244 are N-terminal acylcarrier protein transacylase domain (SAT). The region spanning glutamine 373 to aspartate 804 is the Ketosynthase family 3 (KS3) domain. Catalysis depends on for beta-ketoacyl synthase activity residues cysteine 545, histidine 680, and histidine 722. The tract at residues phenylalanine 910–glutamate 1229 is malonyl-CoA:ACP transacylase (MAT) domain. The active-site For acyl/malonyl transferase activity is the serine 999. The tract at residues serine 1288 to proline 1601 is product template (PT) domain. The interval glutamine 1292 to proline 1423 is N-terminal hotdog fold. One can recognise a PKS/mFAS DH domain in the interval glutamine 1292–aspartate 1596. Residue histidine 1324 is the Proton acceptor; for dehydratase activity of the active site. Residues alanine 1451–aspartate 1596 are C-terminal hotdog fold. Aspartate 1509 serves as the catalytic Proton donor; for dehydratase activity. In terms of domain architecture, Carrier 1 spans proline 1640–glycine 1714. Serine 1674 bears the O-(pantetheine 4'-phosphoryl)serine mark. Residues glutamine 1712–leucine 1758 are disordered. Positions methionine 1713–serine 1739 are enriched in low complexity. Residues proline 1740–leucine 1758 show a composition bias toward polar residues. The region spanning glutamine 1759–proline 1836 is the Carrier 2 domain. Serine 1796 carries the O-(pantetheine 4'-phosphoryl)serine modification. A claisen cyclase domain region spans residues threonine 1863 to methionine 2135. Serine 1953 serves as the catalytic For Claisen cyclase activity.

It carries out the reaction 6 malonyl-CoA + acetyl-CoA + 6 H(+) = naphtopyrone YWA1 + 6 CO2 + 7 CoA + H2O. The protein operates within pigment biosynthesis. It participates in polyketide biosynthesis; heptaketide naphthopyrone YWA1 biosynthesis. In terms of biological role, non-reducing polyketide synthase involved in the biosynthesis of a yellow conidial pigment. Probably forms the heptaketide naphthopyrene YWA1 via condensation of acetate units. This Penicillium expansum (Blue mold rot fungus) protein is Conidial yellow pigment biosynthesis polyketide synthase melA.